A 278-amino-acid chain; its full sequence is HTH-type transcriptional activator RhaS (278 aa).

Positions 174–272 (NLLLAWLEDH…NWSPRDIRQG (99 aa)) constitute an HTH araC/xylS-type domain. DNA-binding regions (H-T-H motif) lie at residues 191–212 (DAVA…KQQT) and 239–262 (VTDI…RREF).

As to quaternary structure, binds DNA as a dimer.

Its subcellular location is the cytoplasm. In terms of biological role, activates expression of the rhaBAD and rhaT operons. In Shigella sonnei (strain Ss046), this protein is HTH-type transcriptional activator RhaS.